A 572-amino-acid polypeptide reads, in one-letter code: Proline--tRNA ligase (572 aa).

The protein belongs to the class-II aminoacyl-tRNA synthetase family. ProS type 1 subfamily. Homodimer.

It localises to the cytoplasm. It catalyses the reaction tRNA(Pro) + L-proline + ATP = L-prolyl-tRNA(Pro) + AMP + diphosphate. Functionally, catalyzes the attachment of proline to tRNA(Pro) in a two-step reaction: proline is first activated by ATP to form Pro-AMP and then transferred to the acceptor end of tRNA(Pro). As ProRS can inadvertently accommodate and process non-cognate amino acids such as alanine and cysteine, to avoid such errors it has two additional distinct editing activities against alanine. One activity is designated as 'pretransfer' editing and involves the tRNA(Pro)-independent hydrolysis of activated Ala-AMP. The other activity is designated 'posttransfer' editing and involves deacylation of mischarged Ala-tRNA(Pro). The misacylated Cys-tRNA(Pro) is not edited by ProRS. This is Proline--tRNA ligase from Buchnera aphidicola subsp. Acyrthosiphon pisum (strain APS) (Acyrthosiphon pisum symbiotic bacterium).